The sequence spans 224 residues: uncharacterized protein (224 aa).

The active site involves Asp-52.

It belongs to the pseudouridine synthase RluA family.

It carries out the reaction a uridine in RNA = a pseudouridine in RNA. This is an uncharacterized protein from Haemophilus influenzae (strain ATCC 51907 / DSM 11121 / KW20 / Rd).